The following is a 628-amino-acid chain: Eukaryotic peptide chain release factor GTP-binding subunit ERF3B (628 aa).

The segment covering 1–10 (MDSGSSSSDS) has biased composition (low complexity). 3 disordered regions span residues 1-44 (MDSG…REPL), 71-124 (SFLR…LEGS), and 146-191 (LEES…KSKS). One can recognise a tr-type G domain in the interval 201–425 (KEHVNVVFIG…YLDNLPNFNR (225 aa)). The G1 stretch occupies residues 210–217 (GHVDAGKS). 213 to 218 (DAGKST) is a binding site for GTP. The interval 266–270 (GKTVE) is G2. Positions 287-290 (DAPG) are G3. Residues 349–352 (NKMD) and 391–393 (SGL) contribute to the GTP site. The tract at residues 349–352 (NKMD) is G4. The G5 stretch occupies residues 391 to 393 (SGL).

Belongs to the TRAFAC class translation factor GTPase superfamily. Classic translation factor GTPase family. ERF3 subfamily. As to quaternary structure, component of the eRF1-eRF3-GTP ternary complex, composed of ETF1/ERF1 and ERF3 (GSPT1/ERF3A or GSPT2/ERF3B) and GTP. Component of the transient SURF (SMG1-UPF1-eRF1-eRF3) complex. Interacts with UPF1 and PABPC1.

The protein localises to the cytoplasm. The catalysed reaction is GTP + H2O = GDP + phosphate + H(+). Its function is as follows. GTPase component of the eRF1-eRF3-GTP ternary complex, a ternary complex that mediates translation termination in response to the termination codons UAA, UAG and UGA. GSPT2/ERF3B mediates ETF1/ERF1 delivery to stop codons: The eRF1-eRF3-GTP complex binds to a stop codon in the ribosomal A-site. GTP hydrolysis by GSPT2/ERF3B induces a conformational change that leads to its dissociation, permitting ETF1/ERF1 to accommodate fully in the A-site. Component of the transient SURF complex which recruits UPF1 to stalled ribosomes in the context of nonsense-mediated decay (NMD) of mRNAs containing premature stop codons. This chain is Eukaryotic peptide chain release factor GTP-binding subunit ERF3B (GSPT2), found in Pongo abelii (Sumatran orangutan).